A 248-amino-acid polypeptide reads, in one-letter code: Phosphatidylglycerol--prolipoprotein diacylglyceryl transferase (248 aa).

3 helical membrane passes run 6–26 (FTLF…GMIL), 47–67 (NIAI…YVVF), and 84–104 (GGGL…YIYT). R130 lines the a 1,2-diacyl-sn-glycero-3-phospho-(1'-sn-glycerol) pocket. 2 consecutive transmembrane segments (helical) span residues 186 to 206 (GQVI…IEGL) and 218 to 238 (MAQV…VYLS).

Belongs to the Lgt family.

It is found in the cell membrane. It catalyses the reaction L-cysteinyl-[prolipoprotein] + a 1,2-diacyl-sn-glycero-3-phospho-(1'-sn-glycerol) = an S-1,2-diacyl-sn-glyceryl-L-cysteinyl-[prolipoprotein] + sn-glycerol 1-phosphate + H(+). It participates in protein modification; lipoprotein biosynthesis (diacylglyceryl transfer). Functionally, catalyzes the transfer of the diacylglyceryl group from phosphatidylglycerol to the sulfhydryl group of the N-terminal cysteine of a prolipoprotein, the first step in the formation of mature lipoproteins. The polypeptide is Phosphatidylglycerol--prolipoprotein diacylglyceryl transferase (Clostridioides difficile (strain 630) (Peptoclostridium difficile)).